A 108-amino-acid chain; its full sequence is Glutaredoxin-1 (108 aa).

The Glutaredoxin domain occupies 3 to 106 (EEFVQQRLAN…DILSSIGVLR (104 aa)). A disulfide bridge connects residues cysteine 23 and cysteine 26.

It belongs to the glutaredoxin family.

The protein localises to the virion. Has thioltransferase and dehydroascorbate reductase activities. This Camelpox virus (strain M-96) protein is Glutaredoxin-1 (OPG075).